A 399-amino-acid chain; its full sequence is F-box/kelch-repeat protein At5g48980 (399 aa).

Positions 1–11 (MADSQRLSTAS) are enriched in polar residues. A disordered region spans residues 1–29 (MADSQRLSTASGVKDGQPPWKKKKLSNDT). The F-box domain occupies 29–75 (TTSNPSLPYDVILIILARVSRSYYTNLSLVSKSFRSILTSPELYKTR). A Kelch repeat occupies 199–248 (IVYLPGSFESPDSLNCVEVYNTMTQTWKPVPPEKRMFKLENLEKKIYYKS).

The protein is F-box/kelch-repeat protein At5g48980 of Arabidopsis thaliana (Mouse-ear cress).